A 222-amino-acid polypeptide reads, in one-letter code: Small ribosomal subunit protein uS3 (222 aa).

Residues 39 to 108 form the KH type-2 domain; sequence IRKFVKNKLS…NVLINIVEVK (70 aa).

The protein belongs to the universal ribosomal protein uS3 family. Part of the 30S ribosomal subunit. Forms a tight complex with proteins S10 and S14.

Its function is as follows. Binds the lower part of the 30S subunit head. Binds mRNA in the 70S ribosome, positioning it for translation. The sequence is that of Small ribosomal subunit protein uS3 from Clostridium acetobutylicum (strain ATCC 824 / DSM 792 / JCM 1419 / IAM 19013 / LMG 5710 / NBRC 13948 / NRRL B-527 / VKM B-1787 / 2291 / W).